The sequence spans 229 residues: 2,3-bisphosphoglycerate-dependent phosphoglycerate mutase (229 aa).

Substrate contacts are provided by residues 8-15 (RHGESAWN), 21-22 (TG), Arg-60, 87-90 (ERHY), Lys-98, 114-115 (RR), and 183-184 (GN). Residue His-9 is the Tele-phosphohistidine intermediate of the active site. Catalysis depends on Glu-87, which acts as the Proton donor/acceptor.

The protein belongs to the phosphoglycerate mutase family. BPG-dependent PGAM subfamily. In terms of assembly, homodimer.

It carries out the reaction (2R)-2-phosphoglycerate = (2R)-3-phosphoglycerate. The protein operates within carbohydrate degradation; glycolysis; pyruvate from D-glyceraldehyde 3-phosphate: step 3/5. Catalyzes the interconversion of 2-phosphoglycerate and 3-phosphoglycerate. The sequence is that of 2,3-bisphosphoglycerate-dependent phosphoglycerate mutase from Polynucleobacter asymbioticus (strain DSM 18221 / CIP 109841 / QLW-P1DMWA-1) (Polynucleobacter necessarius subsp. asymbioticus).